A 79-amino-acid chain; its full sequence is D-alanyl carrier protein (79 aa).

Residues 1-77 enclose the Carrier domain; that stretch reads MDVKAEVIEI…KIVEGVTELR (77 aa). An O-(pantetheine 4'-phosphoryl)serine modification is found at Ser35.

The protein belongs to the DltC family. Post-translationally, 4'-phosphopantetheine is transferred from CoA to a specific serine of apo-DCP.

The protein localises to the cytoplasm. It participates in cell wall biogenesis; lipoteichoic acid biosynthesis. Functionally, carrier protein involved in the D-alanylation of lipoteichoic acid (LTA). The loading of thioester-linked D-alanine onto DltC is catalyzed by D-alanine--D-alanyl carrier protein ligase DltA. The DltC-carried D-alanyl group is further transferred to cell membrane phosphatidylglycerol (PG) by forming an ester bond, probably catalyzed by DltD. D-alanylation of LTA plays an important role in modulating the properties of the cell wall in Gram-positive bacteria, influencing the net charge of the cell wall. The sequence is that of D-alanyl carrier protein from Streptococcus thermophilus (strain CNRZ 1066).